The primary structure comprises 229 residues: Uracil-DNA glycosylase (229 aa).

The Proton acceptor role is filled by D64.

It belongs to the uracil-DNA glycosylase (UDG) superfamily. UNG family.

The protein resides in the cytoplasm. It catalyses the reaction Hydrolyzes single-stranded DNA or mismatched double-stranded DNA and polynucleotides, releasing free uracil.. Excises uracil residues from the DNA which can arise as a result of misincorporation of dUMP residues by DNA polymerase or due to deamination of cytosine. The chain is Uracil-DNA glycosylase from Geobacillus thermodenitrificans (strain NG80-2).